The following is a 710-amino-acid chain: Protein phosphatase 1 regulatory subunit 37 (710 aa).

The segment covering 1 to 12 (MEIPPQEAPPGP) has biased composition (pro residues). The interval 1-46 (MEIPPQEAPPGPGADADADAEAEEAPAEAGSSSGASPPTDGRLKAA) is disordered. A compositionally biased stretch (acidic residues) spans 16–26 (ADADAEAEEAP). Positions 27-38 (AEAGSSSGASPP) are enriched in low complexity. Phosphoserine is present on residues S54 and S60. 5 LRR repeats span residues 224-244 (SLAVLHLENASLSGRPLMLLA), 252-273 (NLQELYLADNKLNGLQDSAQLG), 281-301 (SLQILDLRNNHVLDSGLAYIC), 310-330 (GLVTLVLWNNQLTHTGMAFLG), and 338-358 (SLETLNLGHNPIGNEGVRNLK). The segment at 487 to 677 (PLEESGDLPA…APPGLEAKGS (191 aa)) is disordered. A compositionally biased stretch (acidic residues) spans 512–531 (SDSDSDSDREEQEEEEEDQS). Positions 543–565 (SSSAPCPALLPSTDSLGPGDKSP) are enriched in low complexity. Phosphoserine is present on S581. Positions 603–624 (PPVPPTSVSSPPPSPPSPPASP) are enriched in pro residues. Residues 637–649 (SEAQPQTEPSQAG) show a composition bias toward polar residues. A compositionally biased stretch (low complexity) spans 656–676 (LKPEFALALAPEAPPGLEAKG).

It belongs to the PPP1R37 family. Interacts with PPP1CA.

Functionally, inhibits phosphatase activity of protein phosphatase 1 (PP1) complexes. In Rattus norvegicus (Rat), this protein is Protein phosphatase 1 regulatory subunit 37 (Ppp1r37).